The following is a 219-amino-acid chain: Orotate phosphoribosyltransferase (219 aa).

Lys-26 serves as a coordination point for 5-phospho-alpha-D-ribose 1-diphosphate. 34–35 contributes to the orotate binding site; that stretch reads FF. 5-phospho-alpha-D-ribose 1-diphosphate-binding positions include 72–73, Arg-98, Lys-99, Lys-102, His-104, and 124–132; these read YK and DDVITAGTA. Orotate contacts are provided by Thr-128 and Arg-156.

It belongs to the purine/pyrimidine phosphoribosyltransferase family. PyrE subfamily. Homodimer. Mg(2+) is required as a cofactor.

The catalysed reaction is orotidine 5'-phosphate + diphosphate = orotate + 5-phospho-alpha-D-ribose 1-diphosphate. The protein operates within pyrimidine metabolism; UMP biosynthesis via de novo pathway; UMP from orotate: step 1/2. Its function is as follows. Catalyzes the transfer of a ribosyl phosphate group from 5-phosphoribose 1-diphosphate to orotate, leading to the formation of orotidine monophosphate (OMP). The protein is Orotate phosphoribosyltransferase of Xanthomonas axonopodis pv. citri (strain 306).